A 341-amino-acid polypeptide reads, in one-letter code: L-threonine 3-dehydrogenase (341 aa).

C38 serves as a coordination point for Zn(2+). Catalysis depends on charge relay system residues T40 and H43. Zn(2+) is bound by residues H63, E64, C93, C96, C99, and C107. NAD(+)-binding positions include I175, D195, R200, 262–264 (LGI), and 286–287 (IY).

Belongs to the zinc-containing alcohol dehydrogenase family. Homotetramer. Zn(2+) is required as a cofactor.

It localises to the cytoplasm. The catalysed reaction is L-threonine + NAD(+) = (2S)-2-amino-3-oxobutanoate + NADH + H(+). The protein operates within amino-acid degradation; L-threonine degradation via oxydo-reductase pathway; glycine from L-threonine: step 1/2. Functionally, catalyzes the NAD(+)-dependent oxidation of L-threonine to 2-amino-3-ketobutyrate. The protein is L-threonine 3-dehydrogenase of Salmonella gallinarum (strain 287/91 / NCTC 13346).